Here is a 103-residue protein sequence, read N- to C-terminus: UPF0145 protein PERMA_0324 (103 aa).

This sequence belongs to the UPF0145 family.

The chain is UPF0145 protein PERMA_0324 from Persephonella marina (strain DSM 14350 / EX-H1).